Consider the following 301-residue polypeptide: Lycopene elongase/hydratase (301 aa).

Positions 1-20 (MSADMAAQSESGEGGDDGRA) are disordered. Helical transmembrane passes span 39–59 (FWLY…SALA), 61–81 (LFGL…NVFL), 110–130 (PVNT…FAVA), 133–153 (VAWP…APPF), 160–180 (LLDS…YAAV), 186–206 (PMLA…FSAI), 229–249 (TYWY…AVDL), 252–272 (GALL…GVDV), and 276–296 (YWWY…GALW).

The protein belongs to the UbiA prenyltransferase family.

The protein localises to the cell membrane. The catalysed reaction is all-trans-lycopene + dimethylallyl diphosphate + H2O = dihydroisopentenyldehydrorhodopin + diphosphate. The enzyme catalyses isopentenyldehydrorhodopin + dimethylallyl diphosphate + H2O = dihydrobisanhydrobacterioruberin + diphosphate. It functions in the pathway carotenoid biosynthesis. Functionally, involved in the biosynthesis of the acyclic C50 carotenoid bacterioruberin (BR). Acts as a bifunctional elongase/hydratase that catalyzes the elongation of lycopene by attaching a C(5) isoprene unit at C-2, as well as the hydroxylation of the previous end of the molecule. The enzyme acts at both ends of the substrate, and catalyzes the conversion of lycopene to the C(45) intermediate dihydroisopentenyldehydrorhodopin (DH-IDR) and the conversion of isopentenyldehydrorhodopin (IDR) to the C(50) carotenoid dihydrobisanhydrobacterioruberin (DH-BABR). Can also catalyze the conversion of lycopene to tetrahydrobisanhydrobacterioruberin (TH-BABR). The protein is Lycopene elongase/hydratase of Haloferax volcanii (strain ATCC 29605 / DSM 3757 / JCM 8879 / NBRC 14742 / NCIMB 2012 / VKM B-1768 / DS2) (Halobacterium volcanii).